Reading from the N-terminus, the 444-residue chain is tRNA modification GTPase MnmE (444 aa).

(6S)-5-formyl-5,6,7,8-tetrahydrofolate is bound by residues R22, E79, and R118. One can recognise a TrmE-type G domain in the interval 214–368 (GMQVVLAGPP…LRDHLKSVMG (155 aa)). N224 serves as a coordination point for K(+). GTP is bound by residues 224–229 (NAGKSS), 243–249 (TEVPGTT), and 268–271 (DTAG). Position 228 (S228) interacts with Mg(2+). K(+) contacts are provided by T243, V245, and T248. Mg(2+) is bound at residue T249. Residue K444 coordinates (6S)-5-formyl-5,6,7,8-tetrahydrofolate.

The protein belongs to the TRAFAC class TrmE-Era-EngA-EngB-Septin-like GTPase superfamily. TrmE GTPase family. In terms of assembly, homodimer. Heterotetramer of two MnmE and two MnmG subunits. It depends on K(+) as a cofactor.

It localises to the cytoplasm. Functionally, exhibits a very high intrinsic GTPase hydrolysis rate. Involved in the addition of a carboxymethylaminomethyl (cmnm) group at the wobble position (U34) of certain tRNAs, forming tRNA-cmnm(5)s(2)U34. The chain is tRNA modification GTPase MnmE from Alkalilimnicola ehrlichii (strain ATCC BAA-1101 / DSM 17681 / MLHE-1).